A 262-amino-acid chain; its full sequence is Phosphatidylserine decarboxylase proenzyme (262 aa).

Catalysis depends on charge relay system; for autoendoproteolytic cleavage activity residues Asp-86, His-142, and Ser-226. Ser-226 (schiff-base intermediate with substrate; via pyruvic acid; for decarboxylase activity) is an active-site residue. Ser-226 is subject to Pyruvic acid (Ser); by autocatalysis.

This sequence belongs to the phosphatidylserine decarboxylase family. PSD-B subfamily. Prokaryotic type I sub-subfamily. As to quaternary structure, heterodimer of a large membrane-associated beta subunit and a small pyruvoyl-containing alpha subunit. Pyruvate serves as cofactor. Is synthesized initially as an inactive proenzyme. Formation of the active enzyme involves a self-maturation process in which the active site pyruvoyl group is generated from an internal serine residue via an autocatalytic post-translational modification. Two non-identical subunits are generated from the proenzyme in this reaction, and the pyruvate is formed at the N-terminus of the alpha chain, which is derived from the carboxyl end of the proenzyme. The autoendoproteolytic cleavage occurs by a canonical serine protease mechanism, in which the side chain hydroxyl group of the serine supplies its oxygen atom to form the C-terminus of the beta chain, while the remainder of the serine residue undergoes an oxidative deamination to produce ammonia and the pyruvoyl prosthetic group on the alpha chain. During this reaction, the Ser that is part of the protease active site of the proenzyme becomes the pyruvoyl prosthetic group, which constitutes an essential element of the active site of the mature decarboxylase.

Its subcellular location is the cell membrane. The enzyme catalyses a 1,2-diacyl-sn-glycero-3-phospho-L-serine + H(+) = a 1,2-diacyl-sn-glycero-3-phosphoethanolamine + CO2. It participates in phospholipid metabolism; phosphatidylethanolamine biosynthesis; phosphatidylethanolamine from CDP-diacylglycerol: step 2/2. Catalyzes the formation of phosphatidylethanolamine (PtdEtn) from phosphatidylserine (PtdSer). The chain is Phosphatidylserine decarboxylase proenzyme from Bacillus anthracis.